The primary structure comprises 74 residues: Conotoxin Vt11.7 (74 aa).

Positions 1–26 are cleaved as a signal peptide; it reads MMFRLTSVGCFLLVIVLLNVAVLTNA. 4 disulfides stabilise this stretch: cysteine 28–cysteine 42, cysteine 35–cysteine 47, cysteine 41–cysteine 51, and cysteine 46–cysteine 55. Positions 62-74 are excised as a propeptide; it reads AHGHGLLRFWGQR.

It belongs to the conotoxin I2 superfamily. As to expression, expressed by the venom duct.

The protein localises to the secreted. The chain is Conotoxin Vt11.7 from Conus planorbis (Planorbis cone).